The sequence spans 324 residues: Glutamyl-Q tRNA(Asp) synthetase (324 aa).

L-glutamate is bound by residues 5–9 (RLAPS) and Glu41. A 'HIGH' region motif is present at residues 8-18 (PSPTGNIHLGN). Positions 105, 107, 128, and 132 each coordinate Zn(2+). Tyr193 and Arg211 together coordinate L-glutamate. Residues 249 to 253 (RLAKR) carry the 'KMSKS' region motif. Lys252 is a binding site for ATP.

The protein belongs to the class-I aminoacyl-tRNA synthetase family. GluQ subfamily. It depends on Zn(2+) as a cofactor.

Catalyzes the tRNA-independent activation of glutamate in presence of ATP and the subsequent transfer of glutamate onto a tRNA(Asp). Glutamate is transferred on the 2-amino-5-(4,5-dihydroxy-2-cyclopenten-1-yl) moiety of the queuosine in the wobble position of the QUC anticodon. In Nitratidesulfovibrio vulgaris (strain ATCC 29579 / DSM 644 / CCUG 34227 / NCIMB 8303 / VKM B-1760 / Hildenborough) (Desulfovibrio vulgaris), this protein is Glutamyl-Q tRNA(Asp) synthetase.